Reading from the N-terminus, the 146-residue chain is Protein new-glue 3 (146 aa).

The signal sequence occupies residues 1–23 (MRYSCVLLLLATVACLLIPQTGG). The tract at residues 23 to 146 (GSTATTTSTS…RRARSARRLS (124 aa)) is disordered. Residues 24 to 66 (STATTTSTSASATTTTSASATTTTASDTTTTTAATTTTSSSSS) are compositionally biased toward low complexity. A run of 4 repeats spans residues 31–38 (TSASATTT), 39–46 (TSASATTT), 47–53 (TASDTTT), and 54–61 (TTAATTTT). The interval 31 to 61 (TSASATTTTSASATTTTASDTTTTTAATTTT) is 4 X 8 AA approximate tandem repeats of T-S-A-S-A-T-T-T. The span at 67–92 (KSKKKKRTYHYTRHVYRPKRIRHIYR) shows a compositional bias: basic residues. Residues 93 to 106 (HKADDDESSTDRTS) are compositionally biased toward basic and acidic residues. A compositionally biased stretch (low complexity) spans 116–132 (SSSSSSSGSTSSRSGNS). Residues 133 to 146 (RIRRRRARSARRLS) are compositionally biased toward basic residues.

In terms of tissue distribution, salivary gland specific.

The protein localises to the secreted. The protein is Protein new-glue 3 (ng3) of Drosophila melanogaster (Fruit fly).